Reading from the N-terminus, the 442-residue chain is Histidine--tRNA ligase (442 aa).

It belongs to the class-II aminoacyl-tRNA synthetase family. Homodimer.

The protein resides in the cytoplasm. It carries out the reaction tRNA(His) + L-histidine + ATP = L-histidyl-tRNA(His) + AMP + diphosphate + H(+). In Helicobacter pylori (strain P12), this protein is Histidine--tRNA ligase.